A 138-amino-acid chain; its full sequence is Small ribosomal subunit protein uS11c (138 aa).

This sequence belongs to the universal ribosomal protein uS11 family. In terms of assembly, part of the 30S ribosomal subunit.

It localises to the plastid. It is found in the chloroplast. The polypeptide is Small ribosomal subunit protein uS11c (Morus indica (Mulberry)).